Reading from the N-terminus, the 75-residue chain is Tautomerase PptA (75 aa).

Pro2 acts as the Proton acceptor; via imino nitrogen in catalysis.

This sequence belongs to the 4-oxalocrotonate tautomerase family. PptA subfamily. Homodimer.

It is found in the cytoplasm. The protein is Tautomerase PptA of Escherichia coli (strain SMS-3-5 / SECEC).